Consider the following 554-residue polypeptide: MFCIQCEQTIRTPAGNGCSYAQGMCGKLAATSDLQDLLIYMLQGVSVYATKARELGVVDPEVDTFVPKAFFSTLTNVNFDDERIIAYAKQAAEYRESLKNAYEAACEAAGKSAESLPPVAQFVLGTSKPEMLSQAPVALLNKDKNDIHEDILGLRLLCLYGLKGAAAYMEHARVLGKTDAEIAGRFHEIMAFLGEPSVDADKLFITAMDIGQLNYRIMAMLDAGETEAFGHPEPTVVNTKAVKGKAILVSGHDMKDLELILEQTAGKGINVYTHGEMLPALAYPAFKKYAHLVGNYGSAWQNQQKEFANFPGAVVMTSNCIIDPNVGQYSDRIFTRSIVGWPGVTHVVGDDFSVVIDKALALDGFQYDEIPHNITIGFARNALMAAAPTVVENVKNGSIKHFFLVGGCDGDKSERSYFTDLAKSAPKDSVILTLGCGKYKFNKLEFGDINGIPRLLDIGQCNDAYSAIQLAIALSQIFECDINELPLNLVLSWFEQKAIVVLLTLLSLGVKNIRTGPTPPAFLTANLAKILEEKFGLRNTTTVEADLKTMLNVA.

Residues C3, C6, C18, and C25 each coordinate [2Fe-2S] cluster. Hybrid [4Fe-2O-2S] cluster-binding residues include H252, E276, C320, C408, C436, C461, E495, and K497. C408 carries the post-translational modification Cysteine persulfide.

This sequence belongs to the HCP family. [2Fe-2S] cluster is required as a cofactor. Hybrid [4Fe-2O-2S] cluster serves as cofactor.

It is found in the cytoplasm. It catalyses the reaction A + NH4(+) + H2O = hydroxylamine + AH2 + H(+). Its function is as follows. Catalyzes the reduction of hydroxylamine to form NH(3) and H(2)O. The chain is Hydroxylamine reductase from Shewanella sp. (strain MR-4).